The sequence spans 631 residues: 1-deoxy-D-xylulose-5-phosphate synthase (631 aa).

Residues His87 and 128–130 (GHS) each bind thiamine diphosphate. Asp159 is a Mg(2+) binding site. Thiamine diphosphate contacts are provided by residues 160–161 (GA), Asn188, Phe295, and Glu377. Position 188 (Asn188) interacts with Mg(2+).

Belongs to the transketolase family. DXPS subfamily. In terms of assembly, homodimer. Mg(2+) is required as a cofactor. The cofactor is thiamine diphosphate.

It carries out the reaction D-glyceraldehyde 3-phosphate + pyruvate + H(+) = 1-deoxy-D-xylulose 5-phosphate + CO2. The protein operates within metabolic intermediate biosynthesis; 1-deoxy-D-xylulose 5-phosphate biosynthesis; 1-deoxy-D-xylulose 5-phosphate from D-glyceraldehyde 3-phosphate and pyruvate: step 1/1. In terms of biological role, catalyzes the acyloin condensation reaction between C atoms 2 and 3 of pyruvate and glyceraldehyde 3-phosphate to yield 1-deoxy-D-xylulose-5-phosphate (DXP). The protein is 1-deoxy-D-xylulose-5-phosphate synthase of Pseudomonas putida (strain ATCC 700007 / DSM 6899 / JCM 31910 / BCRC 17059 / LMG 24140 / F1).